The sequence spans 347 residues: Melanoma-associated antigen B1 (347 aa).

The segment covering 1-17 has biased composition (basic residues); it reads MPRGQKSKLRAREKRRK. The segment at 1 to 104 is disordered; the sequence is MPRGQKSKLR…QATTSTESSV (104 aa). Polar residues-rich tracts occupy residues 39–53 and 89–102; these read PSSSPVLGDTPTSSP and ENASFSQATTSTES. An MAGE domain is found at 108–307; it reads VAWEAGMLMH…RDFPSHYEEA (200 aa). The segment at 315-347 is disordered; sequence AQVRSSVRARRRTTATTFRARSRAPFSRSSHPM. Positions 328–347 are enriched in low complexity; that stretch reads TATTFRARSRAPFSRSSHPM.

In terms of tissue distribution, expressed only in testis.

In Homo sapiens (Human), this protein is Melanoma-associated antigen B1 (MAGEB1).